The sequence spans 611 residues: MPEVADTCSLASPASVCRTQHLHLRCSVDFARRTLTGTAALTVQSQEENLRSLTLDTKDLTIEKVVINGQEVKYTLGESQGYKGSPMEISLPIALSKNQEIVIEISFETSPKSSALQWLTPEQTSGKQHPYLFSQCQAIHCRAILPCQDTPSVKLTYTAEVSVPKELVALMSAIRDGEAPDPEDPSRKIYRFNQRVPIPCYLIALVVGALESRQIGPRTLVWSEKEQVEKSANEFSETESMLKIAEDLGGPYVWGQYDLLVLPPSFPYGGMENPCLTFVTPTLLAGDKSLSNVIAHEISHSWTGNLVTNKTWDHFWLNEGHTVYLERHICGRLFGEKFRHFHALGGWGELQNTIKTFGESHPFTKLVVDLKDVDPDVAYSSIPYEKGFALLFYLEQLLGGPEVFLGFLKAYVKKFSYQSVTTDDWKSFLYSHFKDKVDLLNQVDWNTWLYAPGLPPVKPNYDVTLTNACIALSQRWVTAKEEDLSSFSIADLKDLSSHQLNEFLAQVLQKAPLPLGHIKRMQEVYNFNAINNSEIRFRWLRLCIQSKWEEAIPLALKMATEQGRMKFTRPLFKDLAAFDKSHDQAVHTYQEHKASMHPVTAMLVGRDLKVD.

Lys-73 is modified (N6-acetyllysine). Residues 135 to 137 (QCQ) and 267 to 272 (PYGGME) contribute to the a peptide site. His-296 provides a ligand contact to Zn(2+). Glu-297 functions as the Proton acceptor in the catalytic mechanism. Residues His-300 and Glu-319 each coordinate Zn(2+). Lys-337 carries the N6-acetyllysine modification. Catalysis depends on Tyr-384, which acts as the Proton donor. Lys-414 is modified (N6-acetyllysine). Ser-416 carries the phosphoserine modification. Residue 564–566 (RMK) coordinates a peptide. At Lys-573 the chain carries N6-acetyllysine.

The protein belongs to the peptidase M1 family. As to quaternary structure, monomer. Requires Zn(2+) as cofactor. Post-translationally, phosphorylation at Ser-416 inhibits leukotriene-A4 hydrolase activity.

Its subcellular location is the cytoplasm. The catalysed reaction is leukotriene A4 + H2O = leukotriene B4. It carries out the reaction (5S,6S)-epoxy-(18R)-hydroxy-(7E,9E,11Z,14Z,16E)-eicosapentaenoate + H2O = resolvin E1. The enzyme catalyses (5S,6S)-epoxy-(18S)-hydroxy-(7E,9E,11Z,14Z,16E)-eicosapentaenoate + H2O = 18S-resolvin E1. It catalyses the reaction Release of the N-terminal residue from a tripeptide.. It participates in lipid metabolism; leukotriene B4 biosynthesis. Its activity is regulated as follows. Inhibited by bestatin. The epoxide hydrolase activity is restrained by suicide inactivation that involves binding of LTA4 to Tyr-379. 4-(4-benzylphenyl)thiazol-2-amine (ARM1) selectively inhibits the epoxide hydrolase activity. Its function is as follows. Bifunctional zinc metalloenzyme that comprises both epoxide hydrolase (EH) and aminopeptidase activities. Acts as an epoxide hydrolase to catalyze the conversion of LTA4 to the pro-inflammatory mediator leukotriene B4 (LTB4). Also has aminopeptidase activity, with high affinity for N-terminal arginines of various synthetic tripeptides. In addition to its pro-inflammatory EH activity, may also counteract inflammation by its aminopeptidase activity, which inactivates by cleavage another neutrophil attractant, the tripeptide Pro-Gly-Pro (PGP), a bioactive fragment of collagen generated by the action of matrix metalloproteinase-9 (MMP9) and prolylendopeptidase (PREPL). Involved also in the biosynthesis of resolvin E1 and 18S-resolvin E1 from eicosapentaenoic acid, two lipid mediators that show potent anti-inflammatory and pro-resolving actions. The protein is Leukotriene A-4 hydrolase (Lta4h) of Mus musculus (Mouse).